The primary structure comprises 102 residues: Large ribosomal subunit protein uL24 (102 aa).

It belongs to the universal ribosomal protein uL24 family. In terms of assembly, part of the 50S ribosomal subunit.

Functionally, one of two assembly initiator proteins, it binds directly to the 5'-end of the 23S rRNA, where it nucleates assembly of the 50S subunit. One of the proteins that surrounds the polypeptide exit tunnel on the outside of the subunit. This is Large ribosomal subunit protein uL24 from Polynucleobacter asymbioticus (strain DSM 18221 / CIP 109841 / QLW-P1DMWA-1) (Polynucleobacter necessarius subsp. asymbioticus).